Reading from the N-terminus, the 62-residue chain is Large ribosomal subunit protein eL24 (62 aa).

Zn(2+) is bound by residues Cys-7, Cys-10, Cys-33, and Cys-37. The C4-type zinc-finger motif lies at Cys-7–Cys-37.

The protein belongs to the eukaryotic ribosomal protein eL24 family. Part of the 50S ribosomal subunit. Forms a cluster with proteins L3 and L14. It depends on Zn(2+) as a cofactor.

Its function is as follows. Binds to the 23S rRNA. The protein is Large ribosomal subunit protein eL24 of Staphylothermus marinus (strain ATCC 43588 / DSM 3639 / JCM 9404 / F1).